A 399-amino-acid polypeptide reads, in one-letter code: 1-deoxy-D-xylulose 5-phosphate reductoisomerase (399 aa).

Residues threonine 13, glycine 14, serine 15, isoleucine 16, and asparagine 127 each coordinate NADPH. Lysine 128 provides a ligand contact to 1-deoxy-D-xylulose 5-phosphate. NADPH is bound at residue glutamate 129. Aspartate 153 contacts Mn(2+). 4 residues coordinate 1-deoxy-D-xylulose 5-phosphate: serine 154, glutamate 155, serine 187, and histidine 210. Glutamate 155 is a binding site for Mn(2+). Residue glycine 216 participates in NADPH binding. 1-deoxy-D-xylulose 5-phosphate contacts are provided by serine 223, asparagine 228, lysine 229, and glutamate 232. Glutamate 232 provides a ligand contact to Mn(2+).

It belongs to the DXR family. It depends on Mg(2+) as a cofactor. The cofactor is Mn(2+).

The catalysed reaction is 2-C-methyl-D-erythritol 4-phosphate + NADP(+) = 1-deoxy-D-xylulose 5-phosphate + NADPH + H(+). It participates in isoprenoid biosynthesis; isopentenyl diphosphate biosynthesis via DXP pathway; isopentenyl diphosphate from 1-deoxy-D-xylulose 5-phosphate: step 1/6. Its function is as follows. Catalyzes the NADPH-dependent rearrangement and reduction of 1-deoxy-D-xylulose-5-phosphate (DXP) to 2-C-methyl-D-erythritol 4-phosphate (MEP). In Bordetella pertussis (strain Tohama I / ATCC BAA-589 / NCTC 13251), this protein is 1-deoxy-D-xylulose 5-phosphate reductoisomerase.